The sequence spans 541 residues: Multidrug transporter protein MdtP (541 aa).

Transmembrane regions (helical) follow at residues 14 to 34 (LLIT…TIVG), 40 to 60 (IVGD…YLLT), 79 to 99 (IVYV…GMAN), 112 to 132 (GIGG…LFTG), 141 to 161 (VFGA…GWIV), 168 to 188 (WVFY…ARGL), 201 to 221 (IAGI…LSFG), 229 to 249 (SWQI…FIIV), 273 to 293 (LIGF…PFFM), 307 to 327 (IMTP…QLVY), 329 to 349 (IGIK…FLLL), 359 to 379 (LVAT…MPIL), 401 to 420 (FFRS…VMNA), and 492 to 512 (LHSV…FTLF).

The protein belongs to the major facilitator superfamily. EmrB family.

Its subcellular location is the cell membrane. Its function is as follows. Multidrug efflux transporter. Contributes to resistance to several antibiotics, including fusidic acid, novobiocin, streptomycin and actinomycin, possibly by pumping these structurally unrelated antibiotics out of cells. The chain is Multidrug transporter protein MdtP from Bacillus subtilis (strain 168).